Here is a 117-residue protein sequence, read N- to C-terminus: Large ribosomal subunit protein bL20 (117 aa).

Belongs to the bacterial ribosomal protein bL20 family.

Functionally, binds directly to 23S ribosomal RNA and is necessary for the in vitro assembly process of the 50S ribosomal subunit. It is not involved in the protein synthesizing functions of that subunit. The polypeptide is Large ribosomal subunit protein bL20 (Actinobacillus succinogenes (strain ATCC 55618 / DSM 22257 / CCUG 43843 / 130Z)).